The chain runs to 413 residues: Branched-chain-amino-acid aminotransferase 3, chloroplastic (413 aa).

A chloroplast-targeting transit peptide spans 1 to 60 (MERAAILPSVNQNYLLCPSRAFSTRLHSSTRNLSPPSFASIKLQHSSSSVSSNGGISLTR). Lysine 259 is subject to N6-(pyridoxal phosphate)lysine.

The protein belongs to the class-IV pyridoxal-phosphate-dependent aminotransferase family. Pyridoxal 5'-phosphate is required as a cofactor. Expressed in the phloem cells.

It localises to the plastid. The protein resides in the chloroplast. The catalysed reaction is L-leucine + 2-oxoglutarate = 4-methyl-2-oxopentanoate + L-glutamate. It catalyses the reaction L-isoleucine + 2-oxoglutarate = (S)-3-methyl-2-oxopentanoate + L-glutamate. The enzyme catalyses L-valine + 2-oxoglutarate = 3-methyl-2-oxobutanoate + L-glutamate. It carries out the reaction a 2-oxocarboxylate + L-methionine = 4-methylsulfanyl-2-oxobutanoate + an L-alpha-amino acid. The protein operates within amino-acid biosynthesis; L-isoleucine biosynthesis; L-isoleucine from 2-oxobutanoate: step 4/4. It participates in amino-acid biosynthesis; L-leucine biosynthesis; L-leucine from 3-methyl-2-oxobutanoate: step 4/4. Its pathway is amino-acid biosynthesis; L-valine biosynthesis; L-valine from pyruvate: step 4/4. With respect to regulation, inhibited by Ser- or Thr-derived imine. Its function is as follows. Converts 2-oxo acids to branched-chain amino acids. Acts on leucine, isoleucine and valine. Also involved in methionine chain elongation cycle of aliphatic glucosinolate formation. Catalyzes the conversion of 5-methylthiopentyl-2-oxo and 6-methylthiohexyl-2-oxo acids to their respective Met derivatives, homomethionine and dihomo-methionine, respectively. This chain is Branched-chain-amino-acid aminotransferase 3, chloroplastic, found in Arabidopsis thaliana (Mouse-ear cress).